Consider the following 91-residue polypeptide: Large ribosomal subunit protein bL31B (91 aa).

It belongs to the bacterial ribosomal protein bL31 family. Type B subfamily. In terms of assembly, part of the 50S ribosomal subunit.

The sequence is that of Large ribosomal subunit protein bL31B from Mycolicibacterium vanbaalenii (strain DSM 7251 / JCM 13017 / BCRC 16820 / KCTC 9966 / NRRL B-24157 / PYR-1) (Mycobacterium vanbaalenii).